Here is a 294-residue protein sequence, read N- to C-terminus: Formamidopyrimidine-DNA glycosylase (294 aa).

The active-site Schiff-base intermediate with DNA is the P2. E3 acts as the Proton donor in catalysis. The Proton donor; for beta-elimination activity role is filled by K58. Positions 105, 124, and 167 each coordinate DNA. An FPG-type zinc finger spans residues 258 to 294; that stretch reads QVYDREGEPCRTRGCKGTVKRFTQNGRSTFWCPSCQK. The active-site Proton donor; for delta-elimination activity is the R284.

The protein belongs to the FPG family. In terms of assembly, monomer. The cofactor is Zn(2+).

The catalysed reaction is Hydrolysis of DNA containing ring-opened 7-methylguanine residues, releasing 2,6-diamino-4-hydroxy-5-(N-methyl)formamidopyrimidine.. It catalyses the reaction 2'-deoxyribonucleotide-(2'-deoxyribose 5'-phosphate)-2'-deoxyribonucleotide-DNA = a 3'-end 2'-deoxyribonucleotide-(2,3-dehydro-2,3-deoxyribose 5'-phosphate)-DNA + a 5'-end 5'-phospho-2'-deoxyribonucleoside-DNA + H(+). Functionally, involved in base excision repair of DNA damaged by oxidation or by mutagenic agents. Acts as a DNA glycosylase that recognizes and removes damaged bases. Has a preference for oxidized purines, such as 7,8-dihydro-8-oxoguanine (8-oxoG). Has AP (apurinic/apyrimidinic) lyase activity and introduces nicks in the DNA strand. Cleaves the DNA backbone by beta-delta elimination to generate a single-strand break at the site of the removed base with both 3'- and 5'-phosphates. This Afipia carboxidovorans (strain ATCC 49405 / DSM 1227 / KCTC 32145 / OM5) (Oligotropha carboxidovorans) protein is Formamidopyrimidine-DNA glycosylase.